A 172-amino-acid polypeptide reads, in one-letter code: 3-hydroxydecanoyl-[acyl-carrier-protein] dehydratase (172 aa).

H71 is an active-site residue.

Belongs to the thioester dehydratase family. FabA subfamily. Homodimer.

It localises to the cytoplasm. The catalysed reaction is a (3R)-hydroxyacyl-[ACP] = a (2E)-enoyl-[ACP] + H2O. It carries out the reaction (3R)-hydroxydecanoyl-[ACP] = (2E)-decenoyl-[ACP] + H2O. The enzyme catalyses (2E)-decenoyl-[ACP] = (3Z)-decenoyl-[ACP]. The protein operates within lipid metabolism; fatty acid biosynthesis. Its function is as follows. Necessary for the introduction of cis unsaturation into fatty acids. Catalyzes the dehydration of (3R)-3-hydroxydecanoyl-ACP to E-(2)-decenoyl-ACP and then its isomerization to Z-(3)-decenoyl-ACP. Can catalyze the dehydratase reaction for beta-hydroxyacyl-ACPs with saturated chain lengths up to 16:0, being most active on intermediate chain length. The chain is 3-hydroxydecanoyl-[acyl-carrier-protein] dehydratase from Enterobacter sp. (strain 638).